The sequence spans 1235 residues: DNA polymerase catalytic subunit (1235 aa).

Disordered regions lie at residues 640–692 (QGRF…TAGR) and 1098–1134 (AAAPGDEPAPPAALPSPAKRPRETPSPADPPGGASKP). Over residues 650–661 (APKRPAAAREDE) the composition is skewed to basic and acidic residues. Acidic residues predominate over residues 662 to 675 (ERPEEEGEDEDERE). Residues 676 to 691 (EGGGEREPEGARETAG) are compositionally biased toward basic and acidic residues.

The protein belongs to the DNA polymerase type-B family. Forms a complex with the ssDNA-binding protein UL29, the DNA polymerase processivity factor, and the alkaline exonuclease. Interacts with the putative helicase-primase complex subunit UL8; this interaction may coordinate leading and lagging strand DNA synthesis at the replication fork.

The protein resides in the host nucleus. The enzyme catalyses DNA(n) + a 2'-deoxyribonucleoside 5'-triphosphate = DNA(n+1) + diphosphate. The catalysed reaction is Endonucleolytic cleavage to 5'-phosphomonoester.. Replicates viral genomic DNA. The replication complex is composed of six viral proteins: the DNA polymerase, processivity factor, primase, primase-associated factor, helicase, and ssDNA-binding protein. Additionally, the polymerase contains an intrinsic ribonuclease H (RNase H) activity that specifically degrades RNA/DNA heteroduplexes or duplex DNA substrates in the 5' to 3' direction. Therefore, it can catalyze the excision of the RNA primers that initiate the synthesis of Okazaki fragments at a replication fork during viral DNA replication. This is DNA polymerase catalytic subunit from Homo sapiens (Human).